Here is a 160-residue protein sequence, read N- to C-terminus: Ribosome maturation factor RimP (160 aa).

It belongs to the RimP family.

The protein resides in the cytoplasm. Its function is as follows. Required for maturation of 30S ribosomal subunits. The chain is Ribosome maturation factor RimP from Cronobacter sakazakii (strain ATCC BAA-894) (Enterobacter sakazakii).